Here is a 380-residue protein sequence, read N- to C-terminus: tRNA-specific 2-thiouridylase MnmA (380 aa).

ATP is bound by residues 6 to 13 and Met32; that span reads ALSGGVDS. Cys101 (nucleophile) is an active-site residue. Cysteines 101 and 199 form a disulfide. Gly125 serves as a coordination point for ATP. An interaction with tRNA region spans residues 148 to 150; sequence KDQ. The Cysteine persulfide intermediate role is filled by Cys199.

This sequence belongs to the MnmA/TRMU family.

It localises to the cytoplasm. The catalysed reaction is S-sulfanyl-L-cysteinyl-[protein] + uridine(34) in tRNA + AH2 + ATP = 2-thiouridine(34) in tRNA + L-cysteinyl-[protein] + A + AMP + diphosphate + H(+). Catalyzes the 2-thiolation of uridine at the wobble position (U34) of tRNA, leading to the formation of s(2)U34. This chain is tRNA-specific 2-thiouridylase MnmA, found in Beutenbergia cavernae (strain ATCC BAA-8 / DSM 12333 / CCUG 43141 / JCM 11478 / NBRC 16432 / NCIMB 13614 / HKI 0122).